The primary structure comprises 425 residues: Trigger factor (425 aa).

The PPIase FKBP-type domain occupies 163–248 (GDTAVIDFEG…VHEIKTKELP (86 aa)).

The protein belongs to the FKBP-type PPIase family. Tig subfamily.

It is found in the cytoplasm. The enzyme catalyses [protein]-peptidylproline (omega=180) = [protein]-peptidylproline (omega=0). In terms of biological role, involved in protein export. Acts as a chaperone by maintaining the newly synthesized protein in an open conformation. Functions as a peptidyl-prolyl cis-trans isomerase. The protein is Trigger factor of Bacillus cereus (strain Q1).